Consider the following 30-residue polypeptide: Cyclotide mela-5 (30 aa).

Positions G1–D30 form a cross-link, cyclopeptide (Gly-Asp). Intrachain disulfides connect C6–C20, C10–C22, and C15–C27.

This is a cyclic peptide. Post-translationally, contains 3 disulfide bonds.

In terms of biological role, probably participates in a plant defense mechanism (Potential). Binds to and induces leakage in phospholipd membranes, particularly ones containing 1-palmitoyl-2-oleophosphatidylethanolamine (POPE). This chain is Cyclotide mela-5, found in Melicytus latifolius (Norfolk Island mahoe).